A 185-amino-acid polypeptide reads, in one-letter code: Signal peptidase I (185 aa).

Residues methionine 1–alanine 20 are Cytoplasmic-facing. The chain crosses the membrane as a helical span at residues isoleucine 21–valine 41. The Extracellular portion of the chain corresponds to aspartate 42–lysine 185. Residues serine 45 and lysine 85 contribute to the active site.

The protein belongs to the peptidase S26 family.

Its subcellular location is the cell membrane. The catalysed reaction is Cleavage of hydrophobic, N-terminal signal or leader sequences from secreted and periplasmic proteins.. The protein is Signal peptidase I (sipA) of Bacillus amyloliquefaciens (Bacillus velezensis).